We begin with the raw amino-acid sequence, 161 residues long: MAKKNSKPKAGSNTIALNKKARHEYFIEDEIEAGMELQGWEVKALRQGKANISESYVFMRDGEAFVSGMTITPLNQASTHVVANPTRVRKLLMSRRELDNLLGRINREGMTLAALSLYWARSWVKIKIGVAKGKKLHDKRDDIKDRDWQRQKARVMKSSLR.

This sequence belongs to the SmpB family.

The protein localises to the cytoplasm. Functionally, required for rescue of stalled ribosomes mediated by trans-translation. Binds to transfer-messenger RNA (tmRNA), required for stable association of tmRNA with ribosomes. tmRNA and SmpB together mimic tRNA shape, replacing the anticodon stem-loop with SmpB. tmRNA is encoded by the ssrA gene; the 2 termini fold to resemble tRNA(Ala) and it encodes a 'tag peptide', a short internal open reading frame. During trans-translation Ala-aminoacylated tmRNA acts like a tRNA, entering the A-site of stalled ribosomes, displacing the stalled mRNA. The ribosome then switches to translate the ORF on the tmRNA; the nascent peptide is terminated with the 'tag peptide' encoded by the tmRNA and targeted for degradation. The ribosome is freed to recommence translation, which seems to be the essential function of trans-translation. This is SsrA-binding protein from Vibrio vulnificus (strain YJ016).